The sequence spans 355 residues: S-adenosylmethionine:tRNA ribosyltransferase-isomerase (355 aa).

The protein belongs to the QueA family. Monomer.

The protein localises to the cytoplasm. The catalysed reaction is 7-aminomethyl-7-carbaguanosine(34) in tRNA + S-adenosyl-L-methionine = epoxyqueuosine(34) in tRNA + adenine + L-methionine + 2 H(+). It functions in the pathway tRNA modification; tRNA-queuosine biosynthesis. Its function is as follows. Transfers and isomerizes the ribose moiety from AdoMet to the 7-aminomethyl group of 7-deazaguanine (preQ1-tRNA) to give epoxyqueuosine (oQ-tRNA). This chain is S-adenosylmethionine:tRNA ribosyltransferase-isomerase, found in Burkholderia ambifaria (strain MC40-6).